A 172-amino-acid polypeptide reads, in one-letter code: Mitochondrial import inner membrane translocase subunit Tim17-B (172 aa).

The cysteines at positions 9 and 78 are disulfide-linked. 3 helical membrane-spanning segments follow: residues 17–37 (CGGA…IKGF), 61–77 (QIGG…STID), and 113–133 (VGSA…GILL). The interval 147–172 (FLEDPSQLTPKEGSPAPGYPNYQQYH) is disordered.

This sequence belongs to the Tim17/Tim22/Tim23 family. In terms of assembly, component of the TIM23 complex at least composed of TIMM23, TIMM17 (TIMM17A or TIMM17B) and TIMM50. The complex interacts with the TIMM44 component of the PAM complex. The complex also interacts with DNAJC15.

It localises to the mitochondrion inner membrane. Essential component of the TIM23 complex, a complex that mediates the translocation of transit peptide-containing proteins across the mitochondrial inner membrane. The chain is Mitochondrial import inner membrane translocase subunit Tim17-B (Timm17b) from Mus musculus (Mouse).